The following is a 329-amino-acid chain: Mo25-like protein (329 aa).

This sequence belongs to the Mo25 family.

The protein is Mo25-like protein (pmo25) of Schizosaccharomyces pombe (strain 972 / ATCC 24843) (Fission yeast).